The primary structure comprises 170 residues: Peptide deformylase (170 aa).

Fe cation contacts are provided by Cys91 and His133. Glu134 is a catalytic residue. His137 serves as a coordination point for Fe cation.

It belongs to the polypeptide deformylase family. Fe(2+) is required as a cofactor.

It catalyses the reaction N-terminal N-formyl-L-methionyl-[peptide] + H2O = N-terminal L-methionyl-[peptide] + formate. Removes the formyl group from the N-terminal Met of newly synthesized proteins. Requires at least a dipeptide for an efficient rate of reaction. N-terminal L-methionine is a prerequisite for activity but the enzyme has broad specificity at other positions. The chain is Peptide deformylase from Histophilus somni (strain 2336) (Haemophilus somnus).